A 285-amino-acid chain; its full sequence is 2,3,4,5-tetrahydropyridine-2,6-dicarboxylate N-succinyltransferase (285 aa).

Belongs to the transferase hexapeptide repeat family.

The protein resides in the cytoplasm. It carries out the reaction (S)-2,3,4,5-tetrahydrodipicolinate + succinyl-CoA + H2O = (S)-2-succinylamino-6-oxoheptanedioate + CoA. It participates in amino-acid biosynthesis; L-lysine biosynthesis via DAP pathway; LL-2,6-diaminopimelate from (S)-tetrahydrodipicolinate (succinylase route): step 1/3. This Beijerinckia indica subsp. indica (strain ATCC 9039 / DSM 1715 / NCIMB 8712) protein is 2,3,4,5-tetrahydropyridine-2,6-dicarboxylate N-succinyltransferase.